A 95-amino-acid chain; its full sequence is RING finger protein Z (95 aa).

The N-myristoyl glycine; by host moiety is linked to residue Gly-2. An RING-type; atypical zinc finger spans residues 38–74 (CKSCWFANRGLIACSDHYLCLNCLTRLRSQSQFCGIC). The PTAP/PSAP motif motif lies at 88–91 (PSAP).

This sequence belongs to the arenaviridae Z protein family. Interacts with protein NP; this interaction probably directs the encapsidated genome to budding sites. Interacts (via RING domain) with polymerase L; this interaction inhibits viral transcription and replication, Z partially blocks the product exit tunnel for the releasing nascent RNA product. Interacts with the glycoprotein complex; this interaction plays a role in virion budding. Interacts with host eIF4E; this interaction results in eIF4E reduced affinity for its substrate, the 5'-m7 G cap structure. Interacts (via late-budding domain) with host TSG101; this interaction is essential for budding and release of viral particles. Interacts with host RPLP0; this interaction may serve to load ribosome-like particles inside the virion. Interacts with host PML; this interaction induces PML bodies redistribution in the cytoplasm upon viral infection. In terms of processing, myristoylation is required for the role of RING finger protein Z in assembly and budding.

Its subcellular location is the virion. The protein resides in the host cytoplasm. The protein localises to the host perinuclear region. It is found in the host cell membrane. Functionally, plays a crucial role in virion assembly and budding. Expressed late in the virus life cycle, it acts as an inhibitor of viral transcription and RNA synthesis by interacting with the viral polymerase L. Presumably recruits the NP encapsidated genome to cellular membranes at budding sites via direct interaction with NP. Plays critical roles in the final steps of viral release by interacting with host TSG101, a member of the vacuolar protein-sorting pathway and using other cellular host proteins involved in vesicle formation pathway. The budding of the virus progeny occurs after association of protein Z with the viral glycoprotein complex SSP-GP1-GP2 at the cell periphery, step that requires myristoylation of protein Z. Also selectively represses protein production by associating with host eIF4E. In cell-based minigenome assay, has an inhibitory effect on the ribonucleoprotein machinery (vRNP), which is responsible for the replication and transcription of the viral genome. This chain is RING finger protein Z, found in Pirital mammarenavirus (isolate Rat/Venezuela/VAV-488/1995) (PIRV).